The primary structure comprises 346 residues: Biotin synthase (346 aa).

The Radical SAM core domain maps to 38–256; it reads RQVQVSTLLS…IAVARIMMPT (219 aa). Residues C53, C57, and C60 each coordinate [4Fe-4S] cluster. Residues C97, C128, C188, and R260 each contribute to the [2Fe-2S] cluster site.

It belongs to the radical SAM superfamily. Biotin synthase family. As to quaternary structure, homodimer. [4Fe-4S] cluster serves as cofactor. [2Fe-2S] cluster is required as a cofactor.

It catalyses the reaction (4R,5S)-dethiobiotin + (sulfur carrier)-SH + 2 reduced [2Fe-2S]-[ferredoxin] + 2 S-adenosyl-L-methionine = (sulfur carrier)-H + biotin + 2 5'-deoxyadenosine + 2 L-methionine + 2 oxidized [2Fe-2S]-[ferredoxin]. It participates in cofactor biosynthesis; biotin biosynthesis; biotin from 7,8-diaminononanoate: step 2/2. In terms of biological role, catalyzes the conversion of dethiobiotin (DTB) to biotin by the insertion of a sulfur atom into dethiobiotin via a radical-based mechanism. The chain is Biotin synthase from Pseudescherichia vulneris (Escherichia vulneris).